A 341-amino-acid polypeptide reads, in one-letter code: S-adenosylmethionine:tRNA ribosyltransferase-isomerase (341 aa).

Belongs to the QueA family. Monomer.

Its subcellular location is the cytoplasm. The catalysed reaction is 7-aminomethyl-7-carbaguanosine(34) in tRNA + S-adenosyl-L-methionine = epoxyqueuosine(34) in tRNA + adenine + L-methionine + 2 H(+). It participates in tRNA modification; tRNA-queuosine biosynthesis. Functionally, transfers and isomerizes the ribose moiety from AdoMet to the 7-aminomethyl group of 7-deazaguanine (preQ1-tRNA) to give epoxyqueuosine (oQ-tRNA). The polypeptide is S-adenosylmethionine:tRNA ribosyltransferase-isomerase (Symbiobacterium thermophilum (strain DSM 24528 / JCM 14929 / IAM 14863 / T)).